The chain runs to 739 residues: Phosphoribosylformylglycinamidine synthase subunit PurL (739 aa).

Residue histidine 54 is part of the active site. The ATP site is built by tyrosine 57 and lysine 96. Glutamate 98 is a binding site for Mg(2+). Residues 99 to 102 and arginine 121 each bind substrate; that span reads SHNH. Histidine 100 functions as the Proton acceptor in the catalytic mechanism. Residue aspartate 122 coordinates Mg(2+). Glutamine 245 lines the substrate pocket. Aspartate 273 contributes to the Mg(2+) binding site. Substrate is bound at residue 317–319; that stretch reads ESQ. ATP is bound by residues aspartate 500 and glycine 537. Residue asparagine 538 coordinates Mg(2+). A substrate-binding site is contributed by serine 540.

Belongs to the FGAMS family. Monomer. Part of the FGAM synthase complex composed of 1 PurL, 1 PurQ and 2 PurS subunits.

The protein localises to the cytoplasm. The enzyme catalyses N(2)-formyl-N(1)-(5-phospho-beta-D-ribosyl)glycinamide + L-glutamine + ATP + H2O = 2-formamido-N(1)-(5-O-phospho-beta-D-ribosyl)acetamidine + L-glutamate + ADP + phosphate + H(+). The protein operates within purine metabolism; IMP biosynthesis via de novo pathway; 5-amino-1-(5-phospho-D-ribosyl)imidazole from N(2)-formyl-N(1)-(5-phospho-D-ribosyl)glycinamide: step 1/2. In terms of biological role, part of the phosphoribosylformylglycinamidine synthase complex involved in the purines biosynthetic pathway. Catalyzes the ATP-dependent conversion of formylglycinamide ribonucleotide (FGAR) and glutamine to yield formylglycinamidine ribonucleotide (FGAM) and glutamate. The FGAM synthase complex is composed of three subunits. PurQ produces an ammonia molecule by converting glutamine to glutamate. PurL transfers the ammonia molecule to FGAR to form FGAM in an ATP-dependent manner. PurS interacts with PurQ and PurL and is thought to assist in the transfer of the ammonia molecule from PurQ to PurL. The chain is Phosphoribosylformylglycinamidine synthase subunit PurL from Bacillus cereus (strain G9842).